The following is a 736-amino-acid chain: Polyphosphate kinase (736 aa).

ATP is bound at residue Asn-91. Residues Arg-421 and Arg-451 each contribute to the Mg(2+) site. The Phosphohistidine intermediate role is filled by His-481. Residues Tyr-514, Arg-610, and His-638 each contribute to the ATP site.

Belongs to the polyphosphate kinase 1 (PPK1) family. The cofactor is Mg(2+). In terms of processing, an intermediate of this reaction is the autophosphorylated ppk in which a phosphate is covalently linked to a histidine residue through a N-P bond.

The enzyme catalyses [phosphate](n) + ATP = [phosphate](n+1) + ADP. Functionally, catalyzes the reversible transfer of the terminal phosphate of ATP to form a long-chain polyphosphate (polyP). This Pseudomonas syringae pv. tomato (strain ATCC BAA-871 / DC3000) protein is Polyphosphate kinase.